The primary structure comprises 320 residues: ATP-dependent 6-phosphofructokinase (320 aa).

G11 contacts ATP. R21–R25 is an ADP binding site. ATP is bound by residues R72–C73 and G102–S105. Position 103 (D103) interacts with Mg(2+). T125–D127 is a binding site for substrate. Catalysis depends on D127, which acts as the Proton acceptor. R154 is a binding site for ADP. Substrate-binding positions include R162 and M169–R171. Residues G185–E187 and K214–H216 each bind ADP. Substrate-binding positions include E223, R244, and H250–R253.

The protein belongs to the phosphofructokinase type A (PFKA) family. ATP-dependent PFK group I subfamily. Prokaryotic clade 'B1' sub-subfamily. Homotetramer. Mg(2+) serves as cofactor.

The protein localises to the cytoplasm. It carries out the reaction beta-D-fructose 6-phosphate + ATP = beta-D-fructose 1,6-bisphosphate + ADP + H(+). Its pathway is carbohydrate degradation; glycolysis; D-glyceraldehyde 3-phosphate and glycerone phosphate from D-glucose: step 3/4. With respect to regulation, allosterically activated by ADP and other diphosphonucleosides, and allosterically inhibited by phosphoenolpyruvate. Its function is as follows. Catalyzes the phosphorylation of D-fructose 6-phosphate to fructose 1,6-bisphosphate by ATP, the first committing step of glycolysis. This chain is ATP-dependent 6-phosphofructokinase, found in Clostridium botulinum (strain Alaska E43 / Type E3).